The following is a 312-amino-acid chain: Glycine--tRNA ligase alpha subunit (312 aa).

The protein belongs to the class-II aminoacyl-tRNA synthetase family. Tetramer of two alpha and two beta subunits.

It is found in the cytoplasm. The catalysed reaction is tRNA(Gly) + glycine + ATP = glycyl-tRNA(Gly) + AMP + diphosphate. This is Glycine--tRNA ligase alpha subunit from Nostoc punctiforme (strain ATCC 29133 / PCC 73102).